An 88-amino-acid polypeptide reads, in one-letter code: Sec-independent protein translocase protein TatA (88 aa).

The helical transmembrane segment at 4–24 (LSIWHWLIVLAVVLVLFVGGG) threads the bilayer. A disordered region spans residues 45 to 88 (ADDETMEGSTGSGGHIAPPGPAAGTVQRDASFSGTGRPSGSSTP). Over residues 75–88 (SFSGTGRPSGSSTP) the composition is skewed to low complexity.

It belongs to the TatA/E family. In terms of assembly, the Tat system comprises two distinct complexes: a TatABC complex, containing multiple copies of TatA, TatB and TatC subunits, and a separate TatA complex, containing only TatA subunits. Substrates initially bind to the TatABC complex, which probably triggers association of the separate TatA complex to form the active translocon.

Its subcellular location is the cell inner membrane. Functionally, part of the twin-arginine translocation (Tat) system that transports large folded proteins containing a characteristic twin-arginine motif in their signal peptide across membranes. TatA could form the protein-conducting channel of the Tat system. This chain is Sec-independent protein translocase protein TatA, found in Gluconacetobacter diazotrophicus (strain ATCC 49037 / DSM 5601 / CCUG 37298 / CIP 103539 / LMG 7603 / PAl5).